The sequence spans 122 residues: S-protein homolog 23 (122 aa).

Positions 1-20 (MQNLSILLVCSFCILGHVSS) are cleaved as a signal peptide. Asparagine 86 carries an N-linked (GlcNAc...) asparagine glycan.

The protein belongs to the plant self-incompatibility (S1) protein family.

It localises to the secreted. The sequence is that of S-protein homolog 23 from Arabidopsis thaliana (Mouse-ear cress).